The chain runs to 177 residues: Alkyl hydroperoxide reductase AhpD (177 aa).

Cys130 (proton donor) is an active-site residue. Cys130 and Cys133 form a disulfide bridge. Cys133 serves as the catalytic Cysteine sulfenic acid (-SOH) intermediate.

The protein belongs to the AhpD family. Homotrimer.

It catalyses the reaction N(6)-[(R)-dihydrolipoyl]-L-lysyl-[lipoyl-carrier protein] + a hydroperoxide = N(6)-[(R)-lipoyl]-L-lysyl-[lipoyl-carrier protein] + an alcohol + H2O. Its function is as follows. Antioxidant protein with alkyl hydroperoxidase activity. Required for the reduction of the AhpC active site cysteine residues and for the regeneration of the AhpC enzyme activity. The protein is Alkyl hydroperoxide reductase AhpD of Corynebacterium aurimucosum (strain ATCC 700975 / DSM 44827 / CIP 107346 / CN-1) (Corynebacterium nigricans).